The primary structure comprises 603 residues: NADH-ubiquinone oxidoreductase chain 5 (603 aa).

16 helical membrane passes run 4-24 (FTTM…ATLI), 38-58 (TAIA…ICLG), 89-109 (FLPV…WYMA), 122-142 (LIFL…QLFI), 171-191 (AILY…WFLL), 211-233 (LPLL…HPWL), 241-261 (TPVS…FLLI), 273-293 (IQTL…ICAL), 301-320 (IVAF…IGIN), 325-347 (ALLH…GSII), 366-386 (MPLT…MPFL), 405-424 (NTWA…AYST), 457-477 (LMLG…PMSL), 488-508 (LAAL…NYLA), 524-544 (IMLG…SLLM), and 582-602 (GLIK…LLMI).

The protein belongs to the complex I subunit 5 family. Core subunit of respiratory chain NADH dehydrogenase (Complex I) which is composed of 45 different subunits.

Its subcellular location is the mitochondrion inner membrane. It carries out the reaction a ubiquinone + NADH + 5 H(+)(in) = a ubiquinol + NAD(+) + 4 H(+)(out). In terms of biological role, core subunit of the mitochondrial membrane respiratory chain NADH dehydrogenase (Complex I) which catalyzes electron transfer from NADH through the respiratory chain, using ubiquinone as an electron acceptor. Essential for the catalytic activity and assembly of complex I. The protein is NADH-ubiquinone oxidoreductase chain 5 (MT-ND5) of Pongo abelii (Sumatran orangutan).